The sequence spans 113 residues: UPF0102 protein SUN_0231 (113 aa).

It belongs to the UPF0102 family.

This Sulfurovum sp. (strain NBC37-1) protein is UPF0102 protein SUN_0231.